The primary structure comprises 209 residues: Protein GET1 (209 aa).

Residues Met-1–Leu-3 are Lumenal-facing. The chain crosses the membrane as a helical span at residues Leu-4–Lys-23. Over Thr-24–Arg-110 the chain is Cytoplasmic. Positions Trp-74–Ser-101 form a coiled coil. Residues Trp-111–Phe-131 form a helical membrane-spanning segment. At Trp-132–Ser-155 the chain is on the lumenal side. The chain crosses the membrane as a helical span at residues Val-156–Val-172. Topologically, residues Ile-173–Leu-209 are cytoplasmic. Positions Met-188–Leu-209 are disordered.

The protein belongs to the WRB/GET1 family. As to quaternary structure, interacts with GET3.

The protein localises to the endoplasmic reticulum membrane. Functionally, required for the post-translational delivery of tail-anchored (TA) proteins to the endoplasmic reticulum. Acts as a membrane receptor for soluble GET3, which recognizes and selectively binds the transmembrane domain of TA proteins in the cytosol. The polypeptide is Protein GET1 (Chaetomium thermophilum (strain DSM 1495 / CBS 144.50 / IMI 039719) (Thermochaetoides thermophila)).